Here is a 210-residue protein sequence, read N- to C-terminus: Probable transcriptional regulator ycf29 (210 aa).

The region spanning Asn3–Leu119 is the Response regulatory domain. Asp52 is subject to 4-aspartylphosphate. Residues Ser142–Asn207 enclose the HTH luxR-type domain.

The protein resides in the plastid. It is found in the cyanelle. The polypeptide is Probable transcriptional regulator ycf29 (ycf29) (Cyanophora paradoxa).